Reading from the N-terminus, the 99-residue chain is uncharacterized protein (99 aa).

The protein belongs to the ycf15 family.

It is found in the plastid. The protein localises to the chloroplast. This is an uncharacterized protein from Saccharum hybrid (Sugarcane).